Reading from the N-terminus, the 376-residue chain is Serine-arginine protein 55 (376 aa).

The RRM 1 domain occupies 4–74 (SRVYVGGLPY…ERVVVEPARG (71 aa)). The tract at residues 73-114 (RGTARGSNRDRYDDRYGGRRGGGGGRYNEKNKNSRSSSRYGP) is disordered. Positions 79–89 (SNRDRYDDRYG) are enriched in basic and acidic residues. An RRM 2 domain is found at 120–193 (YRLIVENLSS…RRIHLVEDRR (74 aa)). Phosphoserine is present on S165. Positions 185–194 (RIHLVEDRRG) are enriched in basic and acidic residues. The segment at 185-376 (RIHLVEDRRG…PDRNNESMDD (192 aa)) is disordered. Residues 196 to 205 (RSGGGGGSGR) are compositionally biased toward gly residues. Basic residues-rich tracts occupy residues 215 to 263 (SRSR…SRSN) and 271 to 283 (SKSKSHSRTRSRS). Over residues 284–304 (PKRERDSRSRSRSVSKRESRS) the composition is skewed to basic and acidic residues.

The protein belongs to the splicing factor SR family. Extensively phosphorylated on serine residues in the RS domain.

Its subcellular location is the nucleus. In terms of biological role, essential for development. May have a critical role in splicing or in controlling alternative splice site use of at least some pre-mRNA in vivo. Not required for all splicing. May play a general role in the condensation or decondensation of chromatin. The sequence is that of Serine-arginine protein 55 (B52) from Drosophila melanogaster (Fruit fly).